A 178-amino-acid chain; its full sequence is Gamma-crystallin S (178 aa).

Serine 2 carries the N-acetylserine modification. Residues 2–5 form an N-terminal arm region; sequence SKTG. Beta/gamma crystallin 'Greek key' domains are found at residues 6–44 and 45–87; these read TKIT…KVEG and GTWA…RAVH. A connecting peptide region spans residues 88–93; it reads LPSGGQ. Beta/gamma crystallin 'Greek key' domains lie at 94 to 134 and 135 to 177; these read YKIQ…KVLE and GVWI…RRIV.

Belongs to the beta/gamma-crystallin family. As to quaternary structure, monomer.

Its function is as follows. Crystallins are the dominant structural components of the vertebrate eye lens. The chain is Gamma-crystallin S (CRYGS) from Homo sapiens (Human).